The primary structure comprises 33 residues: Mu-theraphotoxin-Ssp1a (33 aa).

Disulfide bonds link C2-C17, C9-C22, and C16-C29. Position 33 is a leucine amide (L33).

It belongs to the neurotoxin 10 (Hwtx-1) family. 22 (Htx-4) subfamily. As to expression, expressed by the venom gland.

The protein resides in the secreted. Gating modifier toxin that traps voltage-sensing domain II of voltage-gated sodium channels in the resting state without significantly altering the voltage-dependence of activation and inactivation, or delay in recovery from inactivation. Inhibits hNav1.7/SCN9A (IC(50)=134 nM), followed in rank order of potency by Nav1.6/SCN8A (IC(50)=191 nM), Nav1.2/SCN2A (IC(50)=239 nM), Nav1.3/SCN3A (IC(50)=547 nM) and Nav1.1/SCN1A (IC(50)=674 nM). Its binding to Nav1.2, Nav1.3 and Nav1.7 is slowly reversible and incomplete, with ~25% of Nav1.2, ~50% of Nav1.3 and ~40% of Nav1.7 channels recovering from block after a 30 minutes washout, respectively. Binds in the aqueous cleft formed between the S1-S2 and S3-S4 loops of each channel subtype, primarily targeting the S3-S4 loop. The sequence is that of Mu-theraphotoxin-Ssp1a from Selenotypus sp. (Feather-legged tarantula).